Here is a 344-residue protein sequence, read N- to C-terminus: Methionine import ATP-binding protein MetN 1 (344 aa).

The ABC transporter domain occupies 2–241 (IEIRNISQRF…PHHEVTRALI (240 aa)). 38–45 (GRSGAGKS) provides a ligand contact to ATP.

This sequence belongs to the ABC transporter superfamily. Methionine importer (TC 3.A.1.24) family. In terms of assembly, the complex is composed of two ATP-binding proteins (MetN), two transmembrane proteins (MetI) and a solute-binding protein (MetQ).

It is found in the cell inner membrane. The catalysed reaction is L-methionine(out) + ATP + H2O = L-methionine(in) + ADP + phosphate + H(+). It catalyses the reaction D-methionine(out) + ATP + H2O = D-methionine(in) + ADP + phosphate + H(+). Part of the ABC transporter complex MetNIQ involved in methionine import. Responsible for energy coupling to the transport system. This Paraburkholderia xenovorans (strain LB400) protein is Methionine import ATP-binding protein MetN 1.